The following is a 551-amino-acid chain: Tetrachloroethene reductive dehalogenase (551 aa).

Positions 1–39 (MGEINRRNFLKVSILGAAAAAVASASAVKGMVSPLVADA) form a signal peptide, tat-type signal. Residues 411–440 (PRKFGVREFCRLCKKCADACPAQAISHEKD) form the 4Fe-4S ferredoxin-type 1 domain. Positions 420, 423, 426, 430, 467, 478, 481, and 485 each coordinate [4Fe-4S] cluster. A 4Fe-4S ferredoxin-type 2 domain is found at 478 to 496 (CSNCVAVCSWNKVETWNHD).

It belongs to the PceA family. Requires [4Fe-4S] cluster as cofactor. It depends on corrinoid as a cofactor. Post-translationally, predicted to be exported by the Tat system. The position of the signal peptide cleavage has been experimentally proven.

The protein localises to the cytoplasm. It is found in the cell membrane. The protein resides in the secreted. The enzyme catalyses trichloroethene + chloride + A + H(+) = tetrachloroethene + AH2. It catalyses the reaction trichloroethene + AH2 = (Z)-1,2-dichloroethene + chloride + A + H(+). PceT is required as a chaperone for prePceA maturation. In the absence or presence of exogenous vitamin B12, the intracellular corrinoid level decreases in fumarate-grown cells and the PceA precursor forms catalytically inactive, corrinoid-free multiprotein aggregates. Exogenous vitamin B12 is not incorporated into the PceA precursor, even though it affects the transposition of the pce gene cluster. Functionally, catalyzes the reductive dechlorination of tetrachloroethene (PCE) to trichloroethene (TCE) and of trichloroethene to cis-1,2-dichloroethene (DCE). Can also use various chlorinated ethanes such as tetrachloroethane, pentachloroethane and hexachloroethane. Reduced methyl viologen can act as the artificial electron donor. The polypeptide is Tetrachloroethene reductive dehalogenase (Desulfitobacterium hafniense (strain Y51)).